The chain runs to 323 residues: Ribosomal protein L11 methyltransferase (323 aa).

Residues threonine 160, glycine 184, aspartate 206, and asparagine 257 each contribute to the S-adenosyl-L-methionine site.

The protein belongs to the methyltransferase superfamily. PrmA family.

It localises to the cytoplasm. It catalyses the reaction L-lysyl-[protein] + 3 S-adenosyl-L-methionine = N(6),N(6),N(6)-trimethyl-L-lysyl-[protein] + 3 S-adenosyl-L-homocysteine + 3 H(+). Functionally, methylates ribosomal protein L11. The sequence is that of Ribosomal protein L11 methyltransferase from Agathobacter rectalis (strain ATCC 33656 / DSM 3377 / JCM 17463 / KCTC 5835 / VPI 0990) (Eubacterium rectale).